A 290-amino-acid polypeptide reads, in one-letter code: MKIAVYGKGGIGKSTTSCNTSIASARRGKRVLQIGCDPKHDSTFTLTGSLIPTIIDTSQSKDYHYEDVWPEDVIYKGYGGVDCVEVGGPPAGAGCGGYVVGETVKLLKELNAFYEYDIILFDVSGDVVCGGFVVLLNYADYCIIITDNGFDALFAVNCIAASVREKARTHSLRLAGSVGNRTSKRDLINRYVEACPMPVLEVSLLIEDIRVSRVKGKTSFEMVEFQPFLNYVCEFYLNIADQILSQPEGVIPKEIPDRELFSLLSDFYLNPTNNERENKNQETLLDFMII.

ATP contacts are provided by residues G10–T15 and K39. A Mg(2+)-binding site is contributed by S14. The [4Fe-4S] cluster site is built by C95 and C129. N180 to R181 lines the ATP pocket.

Belongs to the NifH/BchL/ChlL family. Homodimer. Protochlorophyllide reductase is composed of three subunits; ChlL, ChlN and ChlB. [4Fe-4S] cluster serves as cofactor.

The protein localises to the plastid. It localises to the chloroplast. The enzyme catalyses chlorophyllide a + oxidized 2[4Fe-4S]-[ferredoxin] + 2 ADP + 2 phosphate = protochlorophyllide a + reduced 2[4Fe-4S]-[ferredoxin] + 2 ATP + 2 H2O. Its pathway is porphyrin-containing compound metabolism; chlorophyll biosynthesis (light-independent). In terms of biological role, component of the dark-operative protochlorophyllide reductase (DPOR) that uses Mg-ATP and reduced ferredoxin to reduce ring D of protochlorophyllide (Pchlide) to form chlorophyllide a (Chlide). This reaction is light-independent. The L component serves as a unique electron donor to the NB-component of the complex, and binds Mg-ATP. The polypeptide is Light-independent protochlorophyllide reductase iron-sulfur ATP-binding protein (Anthoceros angustus (Hornwort)).